Here is a 489-residue protein sequence, read N- to C-terminus: L-arabinose isomerase (489 aa).

Glutamate 300, glutamate 325, histidine 342, and histidine 441 together coordinate Mn(2+).

This sequence belongs to the arabinose isomerase family. Requires Mn(2+) as cofactor.

It carries out the reaction beta-L-arabinopyranose = L-ribulose. The protein operates within carbohydrate degradation; L-arabinose degradation via L-ribulose; D-xylulose 5-phosphate from L-arabinose (bacterial route): step 1/3. Its function is as follows. Catalyzes the conversion of L-arabinose to L-ribulose. This chain is L-arabinose isomerase, found in Clostridium beijerinckii (strain ATCC 51743 / NCIMB 8052) (Clostridium acetobutylicum).